Reading from the N-terminus, the 319-residue chain is Probable cell division protein WhiA (319 aa).

A DNA-binding region (H-T-H motif) is located at residues 278 to 311 (SLKELGQMLNPPVGKSGVNHRLRRLESLAEAFSR).

Belongs to the WhiA family.

Its function is as follows. Involved in cell division and chromosome segregation. The sequence is that of Probable cell division protein WhiA from Heliobacterium modesticaldum (strain ATCC 51547 / Ice1).